A 173-amino-acid chain; its full sequence is RNA pyrophosphohydrolase (173 aa).

The region spanning 6-149 (GFRANVGIIL…KRGVYRRALR (144 aa)) is the Nudix hydrolase domain. Residues 38–59 (GGIDEGETPLDAMYRELWEEVG) carry the Nudix box motif.

Belongs to the Nudix hydrolase family. RppH subfamily. A divalent metal cation is required as a cofactor.

In terms of biological role, accelerates the degradation of transcripts by removing pyrophosphate from the 5'-end of triphosphorylated RNA, leading to a more labile monophosphorylated state that can stimulate subsequent ribonuclease cleavage. The sequence is that of RNA pyrophosphohydrolase from Psychrobacter sp. (strain PRwf-1).